The following is a 146-amino-acid chain: Acetyl-CoA decarbonylase/synthase complex subunit epsilon (146 aa).

It belongs to the CdhB family. As to quaternary structure, heterotetramer of two alpha and two epsilon subunits. The ACDS complex is made up of alpha, epsilon, beta, gamma and delta subunits with a probable stoichiometry of (alpha(2)epsilon(2))(4)-beta(8)-(gamma(1)delta(1))(8).

Its function is as follows. Part of a complex that catalyzes the reversible cleavage of acetyl-CoA, allowing autotrophic growth from CO(2). The alpha-epsilon subcomponent functions as a carbon monoxide dehydrogenase. The precise role of the epsilon subunit is unclear; it may have a stabilizing role within the alpha(2)epsilon(2) component and/or be involved in electron transfer to FAD during a potential FAD-mediated CO oxidation. This Methanocaldococcus jannaschii (strain ATCC 43067 / DSM 2661 / JAL-1 / JCM 10045 / NBRC 100440) (Methanococcus jannaschii) protein is Acetyl-CoA decarbonylase/synthase complex subunit epsilon.